Here is a 303-residue protein sequence, read N- to C-terminus: N-acetyl-D-glucosamine kinase (303 aa).

Residues 4 to 11 (GFDIGGTK) and 133 to 140 (GVGGGLIF) each bind ATP. His157, Cys177, Cys179, and Cys184 together coordinate Zn(2+).

It belongs to the ROK (NagC/XylR) family. NagK subfamily.

It catalyses the reaction N-acetyl-D-glucosamine + ATP = N-acetyl-D-glucosamine 6-phosphate + ADP + H(+). It functions in the pathway cell wall biogenesis; peptidoglycan recycling. Functionally, catalyzes the phosphorylation of N-acetyl-D-glucosamine (GlcNAc) derived from cell-wall degradation, yielding GlcNAc-6-P. This chain is N-acetyl-D-glucosamine kinase, found in Escherichia coli O157:H7.